The primary structure comprises 172 residues: Adenine phosphoribosyltransferase (172 aa).

Belongs to the purine/pyrimidine phosphoribosyltransferase family. As to quaternary structure, homodimer.

The protein resides in the cytoplasm. The catalysed reaction is AMP + diphosphate = 5-phospho-alpha-D-ribose 1-diphosphate + adenine. It functions in the pathway purine metabolism; AMP biosynthesis via salvage pathway; AMP from adenine: step 1/1. Catalyzes a salvage reaction resulting in the formation of AMP, that is energically less costly than de novo synthesis. In Clostridium novyi (strain NT), this protein is Adenine phosphoribosyltransferase.